The chain runs to 127 residues: Protein ApaG (127 aa).

The region spanning 3–127 (DADVYAISVE…FVLAIPRTLH (125 aa)) is the ApaG domain.

The chain is Protein ApaG from Stenotrophomonas maltophilia (strain K279a).